We begin with the raw amino-acid sequence, 166 residues long: Putative transmembrane protein ORF166 (166 aa).

The next 3 membrane-spanning stretches (helical) occupy residues 35 to 55 (IILVFLITMPVRFFICIFAGL), 60 to 80 (PICVLINLLPPLAIAIPFVTA), and 124 to 144 (IFCLVGIIIADVLNPILAFIN).

Its subcellular location is the host membrane. In Acidianus convivator (ABV), this protein is Putative transmembrane protein ORF166.